The chain runs to 157 residues: UPF0262 protein RHECIAT_CH0000657 (157 aa).

The protein belongs to the UPF0262 family.

This Rhizobium etli (strain CIAT 652) protein is UPF0262 protein RHECIAT_CH0000657.